The sequence spans 313 residues: Homoserine O-succinyltransferase (313 aa).

The active-site Acyl-thioester intermediate is the C142. Residues K163 and S192 each coordinate substrate. H235 functions as the Proton acceptor in the catalytic mechanism. The active site involves E237. R249 contacts substrate.

The protein belongs to the MetA family.

The protein resides in the cytoplasm. The catalysed reaction is L-homoserine + succinyl-CoA = O-succinyl-L-homoserine + CoA. The protein operates within amino-acid biosynthesis; L-methionine biosynthesis via de novo pathway; O-succinyl-L-homoserine from L-homoserine: step 1/1. Functionally, transfers a succinyl group from succinyl-CoA to L-homoserine, forming succinyl-L-homoserine. This chain is Homoserine O-succinyltransferase, found in Vibrio vulnificus (strain CMCP6).